The following is a 123-amino-acid chain: Large ribosomal subunit protein uL18 (123 aa).

It belongs to the universal ribosomal protein uL18 family. In terms of assembly, part of the 50S ribosomal subunit; part of the 5S rRNA/L5/L18/L25 subcomplex. Contacts the 5S and 23S rRNAs.

Its function is as follows. This is one of the proteins that bind and probably mediate the attachment of the 5S RNA into the large ribosomal subunit, where it forms part of the central protuberance. The polypeptide is Large ribosomal subunit protein uL18 (Desulforudis audaxviator (strain MP104C)).